The primary structure comprises 1358 residues: DNA-directed RNA polymerase subunit beta (1358 aa).

Belongs to the RNA polymerase beta chain family. The RNAP catalytic core consists of 2 alpha, 1 beta, 1 beta' and 1 omega subunit. When a sigma factor is associated with the core the holoenzyme is formed, which can initiate transcription.

The enzyme catalyses RNA(n) + a ribonucleoside 5'-triphosphate = RNA(n+1) + diphosphate. DNA-dependent RNA polymerase catalyzes the transcription of DNA into RNA using the four ribonucleoside triphosphates as substrates. The chain is DNA-directed RNA polymerase subunit beta from Francisella tularensis subsp. mediasiatica (strain FSC147).